The chain runs to 130 residues: Small ribosomal subunit protein uS8 (130 aa).

It belongs to the universal ribosomal protein uS8 family. In terms of assembly, part of the 30S ribosomal subunit. Contacts proteins S5 and S12.

In terms of biological role, one of the primary rRNA binding proteins, it binds directly to 16S rRNA central domain where it helps coordinate assembly of the platform of the 30S subunit. The sequence is that of Small ribosomal subunit protein uS8 from Sodalis glossinidius (strain morsitans).